The sequence spans 108 residues: Nucleoid-associated protein BP1550 (108 aa).

Positions 87 to 108 (SQEKMASVTAGMPLPPGMKLPF) are disordered. Residues 99-108 (PLPPGMKLPF) are compositionally biased toward pro residues.

Belongs to the YbaB/EbfC family. Homodimer.

It localises to the cytoplasm. Its subcellular location is the nucleoid. Its function is as follows. Binds to DNA and alters its conformation. May be involved in regulation of gene expression, nucleoid organization and DNA protection. The polypeptide is Nucleoid-associated protein BP1550 (Bordetella pertussis (strain Tohama I / ATCC BAA-589 / NCTC 13251)).